Consider the following 258-residue polypeptide: Regulatory protein RecX (258 aa).

This sequence belongs to the RecX family.

It localises to the cytoplasm. Its function is as follows. Modulates RecA activity. The chain is Regulatory protein RecX from Streptococcus agalactiae serotype Ia (strain ATCC 27591 / A909 / CDC SS700).